The following is a 483-amino-acid chain: ATP synthase subunit beta (483 aa).

162 to 169 (GGAGVGKT) lines the ATP pocket.

It belongs to the ATPase alpha/beta chains family. In terms of assembly, F-type ATPases have 2 components, CF(1) - the catalytic core - and CF(0) - the membrane proton channel. CF(1) has five subunits: alpha(3), beta(3), gamma(1), delta(1), epsilon(1). CF(0) has four main subunits: a(1), b(1), b'(1) and c(9-12).

It localises to the cellular thylakoid membrane. It carries out the reaction ATP + H2O + 4 H(+)(in) = ADP + phosphate + 5 H(+)(out). Its function is as follows. Produces ATP from ADP in the presence of a proton gradient across the membrane. The catalytic sites are hosted primarily by the beta subunits. The protein is ATP synthase subunit beta of Rippkaea orientalis (strain PCC 8801 / RF-1) (Cyanothece sp. (strain PCC 8801)).